Reading from the N-terminus, the 104-residue chain is MFKKGLLALALVFSLPVFAAEHWIDVRVPEQYQQEHVQGAINIPLKEVKERIATAVPDKNDTVKVYCNAGRQSGQAKEILSEMGYTHVENAGGLKDIAMPKVKG.

The first 19 residues, methionine 1–alanine 19, serve as a signal peptide directing secretion. Residues alanine 20–glycine 104 form the Rhodanese domain. The active-site Cysteine persulfide intermediate is cysteine 67.

Monomer.

Its subcellular location is the periplasm. It carries out the reaction thiosulfate + hydrogen cyanide = thiocyanate + sulfite + 2 H(+). With respect to regulation, inhibited by thiosulfate above 100 mM, particularly at low cyanide concentrations (&lt;5 mM). Inhibited by sodium sulfate or sodium chloride at 0.25 M which gives around 50% inhibition of rhodanese activity. Addition of sodium phosphate at the same concentration results in about 65% inhibition. Sulfite strongly inhibits PspE activity (1 mM sodium sulfite resulted in more than 50% inhibition of rhodanese activity). Functionally, the phage shock protein (psp) operon (pspABCDE) may play a significant role in the competition for survival under nutrient- or energy-limited conditions. PspE catalyzes the sulfur-transfer reaction from thiosulfate to cyanide, to form sulfite and thiocyanate. Also able to use dithiol (dithiothreitol) as an alternate sulfur acceptor. Also possesses a very low mercaptopyruvate sulfurtransferase activity. The protein is Thiosulfate sulfurtransferase PspE (pspE) of Escherichia coli (strain K12).